Reading from the N-terminus, the 546-residue chain is ATP synthase subunit alpha (546 aa).

172-179 (GDRKTGKT) provides a ligand contact to ATP. Composition is skewed to polar residues over residues 511–520 (FRTTEGNNLG) and 536–546 (TELNVSRKTAK). The disordered stretch occupies residues 511–546 (FRTTEGNNLGTEAPVDPLAADDVNKTELNVSRKTAK).

This sequence belongs to the ATPase alpha/beta chains family. F-type ATPases have 2 components, CF(1) - the catalytic core - and CF(0) - the membrane proton channel. CF(1) has five subunits: alpha(3), beta(3), gamma(1), delta(1), epsilon(1). CF(0) has three main subunits: a(1), b(2) and c(9-12). The alpha and beta chains form an alternating ring which encloses part of the gamma chain. CF(1) is attached to CF(0) by a central stalk formed by the gamma and epsilon chains, while a peripheral stalk is formed by the delta and b chains.

It is found in the cell membrane. The enzyme catalyses ATP + H2O + 4 H(+)(in) = ADP + phosphate + 5 H(+)(out). Its function is as follows. Produces ATP from ADP in the presence of a proton gradient across the membrane. The alpha chain is a regulatory subunit. This is ATP synthase subunit alpha from Corynebacterium aurimucosum (strain ATCC 700975 / DSM 44827 / CIP 107346 / CN-1) (Corynebacterium nigricans).